The following is a 184-amino-acid chain: ATP synthase subunit b, chloroplastic (184 aa).

Residues 27-49 (LATNLINLSVVLGVLIFFGKGVL) traverse the membrane as a helical segment.

It belongs to the ATPase B chain family. As to quaternary structure, F-type ATPases have 2 components, F(1) - the catalytic core - and F(0) - the membrane proton channel. F(1) has five subunits: alpha(3), beta(3), gamma(1), delta(1), epsilon(1). F(0) has four main subunits: a(1), b(1), b'(1) and c(10-14). The alpha and beta chains form an alternating ring which encloses part of the gamma chain. F(1) is attached to F(0) by a central stalk formed by the gamma and epsilon chains, while a peripheral stalk is formed by the delta, b and b' chains.

The protein resides in the plastid. The protein localises to the chloroplast thylakoid membrane. Functionally, f(1)F(0) ATP synthase produces ATP from ADP in the presence of a proton or sodium gradient. F-type ATPases consist of two structural domains, F(1) containing the extramembraneous catalytic core and F(0) containing the membrane proton channel, linked together by a central stalk and a peripheral stalk. During catalysis, ATP synthesis in the catalytic domain of F(1) is coupled via a rotary mechanism of the central stalk subunits to proton translocation. In terms of biological role, component of the F(0) channel, it forms part of the peripheral stalk, linking F(1) to F(0). The protein is ATP synthase subunit b, chloroplastic of Manihot esculenta (Cassava).